The following is a 669-amino-acid chain: PAN2-PAN3 deadenylation complex subunit PAN3 (669 aa).

Residues 1–10 (MATTFGSPSG) show a composition bias toward polar residues. The disordered stretch occupies residues 1 to 25 (MATTFGSPSGDSRRGVASPRPKGRE). The C3H1-type zinc finger occupies 25-54 (EAKNTFCRNVTIYGHCRYENSKCRPPHLPD). Residues 247–519 (QVMPNSTLPV…DIDNFLGGIS (273 aa)) are pseudokinase domain. Residues Arg298, 347–354 (DYHPNSKS), and 408–409 (SK) contribute to the ATP site. The stretch at 520 to 558 (DQLASVFDSELHAQDTLTNTLGRELESSRIVRLLVKLNM) forms a coiled coil. Residues 559 to 669 (VNERPELDAS…LIRAGRGQGK (111 aa)) are knob domain.

Belongs to the protein kinase superfamily. PAN3 family. As to quaternary structure, homodimer. Forms a heterotrimer with a catalytic subunit PAN2 to form the poly(A)-nuclease (PAN) deadenylation complex. Interacts (via PAM-2 motif) with poly(A)-binding protein PAB1 (via PABC domain), conferring substrate specificity of the enzyme complex.

Its subcellular location is the cytoplasm. Regulatory subunit of the poly(A)-nuclease (PAN) deadenylation complex, one of two cytoplasmic mRNA deadenylases involved in mRNA turnover. PAN specifically shortens poly(A) tails of RNA and the activity is stimulated by poly(A)-binding protein PAB1. PAN deadenylation is followed by rapid degradation of the shortened mRNA tails by the CCR4-NOT complex. Deadenylated mRNAs are then degraded by two alternative mechanisms, namely exosome-mediated 3'-5' exonucleolytic degradation, or deadenylation-dependent mRNA decaping and subsequent 5'-3' exonucleolytic degradation by XRN1. May also be involved in post-transcriptional maturation of mRNA poly(A) tails. PAN3 acts as a positive regulator for PAN activity, recruiting the catalytic subunit PAN2 to mRNA via its interaction with RNA and with PAB1. The protein is PAN2-PAN3 deadenylation complex subunit PAN3 of Phaeosphaeria nodorum (strain SN15 / ATCC MYA-4574 / FGSC 10173) (Glume blotch fungus).